The following is a 262-amino-acid chain: Tetratricopeptide repeat protein 33 (262 aa).

A disordered region spans residues 17–63; sequence ATSQQFEAEAADEKDAAENEDGNWLQASKRRKETLQEGCKQRSQQLK. 3 TPR repeats span residues 59-92, 93-126, and 127-160; these read SQQL…TPGD, ATLY…NPHS, and WEAW…YPMN. S197 carries the phosphoserine modification.

The polypeptide is Tetratricopeptide repeat protein 33 (Ttc33) (Mus musculus (Mouse)).